A 218-amino-acid polypeptide reads, in one-letter code: Adenylate kinase (218 aa).

Residue 10 to 15 (GAGKGT) coordinates ATP. The NMP stretch occupies residues 30 to 59 (STGDMLRAAVKAGTPLGLQAKAVMDSGSLV). AMP-binding positions include threonine 31, arginine 36, 57-59 (SLV), 85-88 (GFPR), and glutamine 92. Positions 122 to 159 (GRRSHPASGRTYHVRFNPPKIDGKDDLTGEALLQREDD) are LID. Residues arginine 123 and 132 to 133 (TY) contribute to the ATP site. Residues arginine 156 and arginine 167 each contribute to the AMP site. Glycine 203 provides a ligand contact to ATP.

The protein belongs to the adenylate kinase family. As to quaternary structure, monomer.

Its subcellular location is the cytoplasm. It catalyses the reaction AMP + ATP = 2 ADP. The protein operates within purine metabolism; AMP biosynthesis via salvage pathway; AMP from ADP: step 1/1. Functionally, catalyzes the reversible transfer of the terminal phosphate group between ATP and AMP. Plays an important role in cellular energy homeostasis and in adenine nucleotide metabolism. The polypeptide is Adenylate kinase (Verminephrobacter eiseniae (strain EF01-2)).